Reading from the N-terminus, the 473-residue chain is MKTLYSLRRFYPVETLFNGTLALAGRDQETTGFAWWAGNARLINLSGKLLGAHVAHAGLIVFWAGAMNLFEVAHFVPEKPMYEQGLILLPHLATLGWGVGPGGEVLDTFPYFVSGVLHLISSAVLGFGGIYHALLGPETLEESFPFFGYVWKDRNKMTTILGIHLILLGIGAFLLVFKALYFGGVYDTWAPGGGDVRKITNLTLSPSIVFGYLLKSPFGGEGWIVSVDDLEDIIGGHVWLGSICILGGIWHILTKPFAWARRALVWSGEAYLSYSLGALSIFGFVACCFVWFNNTAYPSEFYGPTGPEASQAQAFTFLVRDQRLGANVGSAQGPTGLGKYLMRSPTGEVIFGGETMRFWDLRAPWLEPLRGPNGLDLSRLKKDIQPWQERRSAEYMTHAPLGSLNSVGGVATEINAVNYVSPRSWLATSHFVLGFFLFVGHLWHAGRARAAAAGFEKGIDRDFEPVLSMTPLN.

Residues 1-14 (MKTLYSLRRFYPVE) constitute a propeptide that is removed on maturation. At T15 the chain carries N-acetylthreonine. Position 15 is a phosphothreonine (T15). Helical transmembrane passes span 69–93 (LFEV…PHLA), 134–155 (LLGP…KDRN), 178–200 (KALY…RKIT), 255–275 (KPFA…LSYS), and 291–312 (WFNN…ASQA). E367 serves as a coordination point for [CaMn4O5] cluster. The chain crosses the membrane as a helical span at residues 447-471 (RARAAAAGFEKGIDRDFEPVLSMTP).

It belongs to the PsbB/PsbC family. PsbC subfamily. PSII is composed of 1 copy each of membrane proteins PsbA, PsbB, PsbC, PsbD, PsbE, PsbF, PsbH, PsbI, PsbJ, PsbK, PsbL, PsbM, PsbT, PsbX, PsbY, PsbZ, Psb30/Ycf12, at least 3 peripheral proteins of the oxygen-evolving complex and a large number of cofactors. It forms dimeric complexes. Binds multiple chlorophylls and provides some of the ligands for the Ca-4Mn-5O cluster of the oxygen-evolving complex. It may also provide a ligand for a Cl- that is required for oxygen evolution. PSII binds additional chlorophylls, carotenoids and specific lipids. serves as cofactor.

It is found in the plastid. Its subcellular location is the chloroplast thylakoid membrane. Its function is as follows. One of the components of the core complex of photosystem II (PSII). It binds chlorophyll and helps catalyze the primary light-induced photochemical processes of PSII. PSII is a light-driven water:plastoquinone oxidoreductase, using light energy to abstract electrons from H(2)O, generating O(2) and a proton gradient subsequently used for ATP formation. The polypeptide is Photosystem II CP43 reaction center protein (Morus indica (Mulberry)).